A 197-amino-acid chain; its full sequence is uncharacterized protein (197 aa).

Positions 1 to 19 (MKLASLLVGSLMLAVPALA) are cleaved as a signal peptide.

Its subcellular location is the secreted. This is an uncharacterized protein from Arthroderma benhamiae (strain ATCC MYA-4681 / CBS 112371) (Trichophyton mentagrophytes).